The chain runs to 142 residues: Large ribosomal subunit protein uL13 (142 aa).

It belongs to the universal ribosomal protein uL13 family. Part of the 50S ribosomal subunit.

Its function is as follows. This protein is one of the early assembly proteins of the 50S ribosomal subunit, although it is not seen to bind rRNA by itself. It is important during the early stages of 50S assembly. This is Large ribosomal subunit protein uL13 from Bordetella petrii (strain ATCC BAA-461 / DSM 12804 / CCUG 43448).